A 1187-amino-acid polypeptide reads, in one-letter code: ATP-dependent DNA helicase MER3 (1187 aa).

The interval 1-41 is disordered; the sequence is MKTKFDRLGTGKRSRPSPNNIDFNDQSATFKRNKKNSRQPS. Residues 16–30 show a composition bias toward polar residues; sequence PSPNNIDFNDQSATF. One can recognise a Helicase ATP-binding domain in the interval 148-322; it reads PSIYESNENC…WLKTNNELPA (175 aa). 161–168 contributes to the ATP binding site; that stretch reads SPTGSGKT. Positions 268–271 match the DEIH box motif; it reads DEIH. Positions 360–542 constitute a Helicase C-terminal domain; the sequence is KLIEIIEKHA…NLIEHLAAET (183 aa). In terms of domain architecture, SEC63 spans 616-922; that stretch reads STAYGNAMTR…PKLEKIEFSI (307 aa). Residues 1039–1054 form a C4-type zinc finger; that stretch reads CFHSCKDKTQCRHLCC. The interval 1146-1187 is disordered; the sequence is NCPEIIPIDLESSDSYSSNTAASSISDPNGDLDFLGSDIEFE. A compositionally biased stretch (low complexity) spans 1158–1171; it reads SDSYSSNTAASSIS.

This sequence belongs to the helicase family. SKI2 subfamily. Oligomerizes. A divalent metal cation is required as a cofactor. The cofactor is Zn(2+).

It is found in the nucleus. The enzyme catalyses Couples ATP hydrolysis with the unwinding of duplex DNA by translocating in the 3'-5' direction.. It catalyses the reaction ATP + H2O = ADP + phosphate + H(+). In terms of biological role, DNA-dependent ATPase and 3'-5' DNA helicase. Required in the control of double strand break transition and crossover during meiosis. ATPase is slightly better stimulated by single-stranded (ss) than double-stranded (ds)DNA. Unwinds Holliday junction (HJ) DNA to Y-DNA and to ssDNA. Efficient unwinding requires 6 nucleotides of 3'-ssDNA; seems to initiate unwinding from blunt ends when they open slightly. Binds HJ, dsDNA, ssDNA and 3'- and 5-overhang DNA. In Saccharomyces cerevisiae (strain ATCC 204508 / S288c) (Baker's yeast), this protein is ATP-dependent DNA helicase MER3.